Consider the following 169-residue polypeptide: Crossover junction endodeoxyribonuclease RuvC (169 aa).

Residues Asp-11, Glu-71, and Asp-143 contribute to the active site. Residues Asp-11, Glu-71, and Asp-143 each contribute to the Mg(2+) site.

This sequence belongs to the RuvC family. As to quaternary structure, homodimer which binds Holliday junction (HJ) DNA. The HJ becomes 2-fold symmetrical on binding to RuvC with unstacked arms; it has a different conformation from HJ DNA in complex with RuvA. In the full resolvosome a probable DNA-RuvA(4)-RuvB(12)-RuvC(2) complex forms which resolves the HJ. It depends on Mg(2+) as a cofactor.

It localises to the cytoplasm. It carries out the reaction Endonucleolytic cleavage at a junction such as a reciprocal single-stranded crossover between two homologous DNA duplexes (Holliday junction).. In terms of biological role, the RuvA-RuvB-RuvC complex processes Holliday junction (HJ) DNA during genetic recombination and DNA repair. Endonuclease that resolves HJ intermediates. Cleaves cruciform DNA by making single-stranded nicks across the HJ at symmetrical positions within the homologous arms, yielding a 5'-phosphate and a 3'-hydroxyl group; requires a central core of homology in the junction. The consensus cleavage sequence is 5'-(A/T)TT(C/G)-3'. Cleavage occurs on the 3'-side of the TT dinucleotide at the point of strand exchange. HJ branch migration catalyzed by RuvA-RuvB allows RuvC to scan DNA until it finds its consensus sequence, where it cleaves and resolves the cruciform DNA. This chain is Crossover junction endodeoxyribonuclease RuvC, found in Rhizobium etli (strain ATCC 51251 / DSM 11541 / JCM 21823 / NBRC 15573 / CFN 42).